Here is a 57-residue protein sequence, read N- to C-terminus: Large ribosomal subunit protein bL32 (57 aa).

Belongs to the bacterial ribosomal protein bL32 family.

The protein is Large ribosomal subunit protein bL32 of Geobacillus sp. (strain WCH70).